The chain runs to 156 residues: 6,7-dimethyl-8-ribityllumazine synthase (156 aa).

Residues Phe23, 57–59 (SFE), and 81–83 (AVI) each bind 5-amino-6-(D-ribitylamino)uracil. 86-87 (GT) contributes to the (2S)-2-hydroxy-3-oxobutyl phosphate binding site. His89 acts as the Proton donor in catalysis. Tyr114 contacts 5-amino-6-(D-ribitylamino)uracil. Arg128 contributes to the (2S)-2-hydroxy-3-oxobutyl phosphate binding site.

It belongs to the DMRL synthase family. Forms an icosahedral capsid composed of 60 subunits, arranged as a dodecamer of pentamers.

It carries out the reaction (2S)-2-hydroxy-3-oxobutyl phosphate + 5-amino-6-(D-ribitylamino)uracil = 6,7-dimethyl-8-(1-D-ribityl)lumazine + phosphate + 2 H2O + H(+). It functions in the pathway cofactor biosynthesis; riboflavin biosynthesis; riboflavin from 2-hydroxy-3-oxobutyl phosphate and 5-amino-6-(D-ribitylamino)uracil: step 1/2. Catalyzes the formation of 6,7-dimethyl-8-ribityllumazine by condensation of 5-amino-6-(D-ribitylamino)uracil with 3,4-dihydroxy-2-butanone 4-phosphate. This is the penultimate step in the biosynthesis of riboflavin. The sequence is that of 6,7-dimethyl-8-ribityllumazine synthase from Halorhodospira halophila (strain DSM 244 / SL1) (Ectothiorhodospira halophila (strain DSM 244 / SL1)).